A 338-amino-acid polypeptide reads, in one-letter code: Ketol-acid reductoisomerase (NADP(+)) (338 aa).

Residues 1 to 181 (MRVFYDKDCD…GGGRTGIIET (181 aa)) form the KARI N-terminal Rossmann domain. NADP(+) is bound by residues 24–27 (YGSQ), arginine 47, serine 50, threonine 52, and 82–85 (DEFQ). Residue histidine 107 is part of the active site. Glycine 133 serves as a coordination point for NADP(+). The 146-residue stretch at 182-327 (TFKDETETDL…EKLRAMMPWI (146 aa)) folds into the KARI C-terminal knotted domain. Mg(2+) is bound by residues aspartate 190, glutamate 194, glutamate 226, and glutamate 230. Substrate is bound at residue serine 251.

It belongs to the ketol-acid reductoisomerase family. Mg(2+) is required as a cofactor.

It catalyses the reaction (2R)-2,3-dihydroxy-3-methylbutanoate + NADP(+) = (2S)-2-acetolactate + NADPH + H(+). The catalysed reaction is (2R,3R)-2,3-dihydroxy-3-methylpentanoate + NADP(+) = (S)-2-ethyl-2-hydroxy-3-oxobutanoate + NADPH + H(+). The protein operates within amino-acid biosynthesis; L-isoleucine biosynthesis; L-isoleucine from 2-oxobutanoate: step 2/4. Its pathway is amino-acid biosynthesis; L-valine biosynthesis; L-valine from pyruvate: step 2/4. Involved in the biosynthesis of branched-chain amino acids (BCAA). Catalyzes an alkyl-migration followed by a ketol-acid reduction of (S)-2-acetolactate (S2AL) to yield (R)-2,3-dihydroxy-isovalerate. In the isomerase reaction, S2AL is rearranged via a Mg-dependent methyl migration to produce 3-hydroxy-3-methyl-2-ketobutyrate (HMKB). In the reductase reaction, this 2-ketoacid undergoes a metal-dependent reduction by NADPH to yield (R)-2,3-dihydroxy-isovalerate. The polypeptide is Ketol-acid reductoisomerase (NADP(+)) (Pseudomonas paraeruginosa (strain DSM 24068 / PA7) (Pseudomonas aeruginosa (strain PA7))).